We begin with the raw amino-acid sequence, 39 residues long: Potassium channel toxin alpha-KTx 2.1 (39 aa).

3 disulfides stabilise this stretch: Cys-7/Cys-29, Cys-13/Cys-34, and Cys-17/Cys-36. Positions 26-34 (GAKCMNGKC) are interaction with Ca(2+)-activated K(+) channels. At Asn-39 the chain carries Asparagine amide.

Belongs to the short scorpion toxin superfamily. Potassium channel inhibitor family. Alpha-KTx 02 subfamily. In terms of tissue distribution, expressed by the venom gland.

The protein localises to the secreted. Its function is as follows. Blocks voltage-gated potassium channels (mKv1.1/KCNA1 (Kd&gt;25 nM), rKv1.2/KCNA2 (Kd=2 nM), mKv1.3/KCNA3 (Kd=1 nM), hKv1.5/KCNA5 (Kd&gt;25 nM) and mKv3.1/KCNC1 (Kd&gt;25 nM)) and calcium-activated potassium channels (KCa1.1/KCNMA1 and KCa3.1/KCNN4, Kd&gt;25 nM). This Centruroides noxius (Mexican scorpion) protein is Potassium channel toxin alpha-KTx 2.1.